The sequence spans 993 residues: DNA-binding protein SMUBP-2 (993 aa).

N-acetylalanine is present on alanine 2. Residues 214–221 (GPPGTGKT), glutamine 403, tyrosine 442, and glutamate 571 each bind ATP. Residues 638–785 (TAFEYLDDIV…KRRFITVSKR (148 aa)) are SS DNA-binding. 3 disordered regions span residues 651–723 (YSHE…VESQ), 782–828 (VSKR…PDQP), and 841–879 (VRSA…DLPT). Polar residues-rich tracts occupy residues 653 to 662 (HENSQGSSHA) and 669 to 681 (PATS…QRQE). In terms of domain architecture, R3H spans 723–786 (QDGVDHFRAM…RRFITVSKRA (64 aa)). Basic and acidic residues predominate over residues 818 to 828 (PPREQRGPDQP). Residues 842-859 (RSAQGQPASKEQQASGQQ) show a composition bias toward polar residues. Positions 864 to 868 (KKKKK) match the Nuclear localization signal motif. An AN1-type zinc finger spans residues 891-940 (VKADNTCGFAKCTAGVTTLGQFCQLCSRRYCLSHHLPEIHGCGERARAHA). The Zn(2+) site is built by cysteine 897, cysteine 902, cysteine 913, cysteine 916, cysteine 921, histidine 924, histidine 930, and cysteine 932. The segment at 971–993 (RRLDKKLSELSNQRTSRRKERGT) is disordered.

This sequence belongs to the DNA2/NAM7 helicase family. In terms of assembly, homooligomer. Interacts with RUVBL1. Interacts with RUVBL2. Interacts with GTF3C1. Interacts with ABT1. Interacts with ribosomes. As to expression, expressed in all tissues examined. Expressed in the developing and adult human brain, with highest expression in the cerebellum. Moderately expressed in fibroblasts.

The protein resides in the nucleus. The protein localises to the cytoplasm. Its subcellular location is the cell projection. It is found in the axon. The enzyme catalyses ATP + H2O = ADP + phosphate + H(+). Functionally, 5' to 3' helicase that unwinds RNA and DNA duplexes in an ATP-dependent reaction. Specific to 5'-phosphorylated single-stranded guanine-rich sequences. May play a role in RNA metabolism, ribosome biogenesis or initiation of translation. May play a role in regulation of transcription. Interacts with tRNA-Tyr. This chain is DNA-binding protein SMUBP-2 (IGHMBP2), found in Homo sapiens (Human).